The sequence spans 357 residues: Set1 complex component swd2 (357 aa).

WD repeat units lie at residues 24–65, 110–149, 199–241, and 247–289; these read NFVG…KSLA, GHKQ…CQGL, PPHV…RVPS, and TQDG…QTVN.

Belongs to the WD repeat SWD2 family. As to quaternary structure, component of the Set1 complex composed of ash2, sdc1, set1, shg1, spp1, swd1, swd2 and swd3.

Its subcellular location is the nucleus. The Set1 complex specifically methylates 'Lys-4' of histone H3. This Schizosaccharomyces pombe (strain 972 / ATCC 24843) (Fission yeast) protein is Set1 complex component swd2.